The primary structure comprises 393 residues: MAKESYKRDKPHVNIGTIGHVDHGKTTLTAAITSVLAKQGLAQQRDFGSIDKAPEERERGITISTAHVEYQTKKRHYAHIDCPGHADYIKNMITGAAQMDGAILVVAGTDGPMPQTREHILLARQVNVPALVVYLNKVDIADPELIELVELELRELLTEYNFPGDDIPIIKGSALKALDGDLEGEKSIMELMDAVDEFIPEPLRDIDKPFLMPVEDVFSISGRGTVGTGRIERGRIKINEEVEIVGIKPTRKSVVTGIEMFQKLLDEGQAGDNAGLLLRGVDKTELERGMVIAKPGTIKPHTKFKAEVYILRKEEGGRHTPFFNGYRPQFYFRTTDVTGSVTLPEGVEMVMPGDNLSVDVELIVPIAMDENLRFAIREGGRTVGAGSVTKIIE.

A tr-type G domain is found at 10–203; sequence KPHVNIGTIG…AVDEFIPEPL (194 aa). Positions 19 to 26 are G1; it reads GHVDHGKT. 19–26 contributes to the GTP binding site; it reads GHVDHGKT. A Mg(2+)-binding site is contributed by threonine 26. The segment at 60-64 is G2; the sequence is GITIS. The interval 81–84 is G3; that stretch reads DCPG. GTP contacts are provided by residues 81-85 and 136-139; these read DCPGH and NKVD. Residues 136-139 form a G4 region; sequence NKVD. The tract at residues 173–175 is G5; sequence SAL.

Belongs to the TRAFAC class translation factor GTPase superfamily. Classic translation factor GTPase family. EF-Tu/EF-1A subfamily. In terms of assembly, monomer.

The protein localises to the cytoplasm. The enzyme catalyses GTP + H2O = GDP + phosphate + H(+). GTP hydrolase that promotes the GTP-dependent binding of aminoacyl-tRNA to the A-site of ribosomes during protein biosynthesis. The polypeptide is Elongation factor Tu (Chlorobium phaeobacteroides (strain DSM 266 / SMG 266 / 2430)).